The primary structure comprises 83 residues: Insect toxin 2-13 (83 aa).

The N-terminal stretch at 1–21 is a signal peptide; that stretch reads MKLLLLLIITASMLIEGLVNA. The 59-residue stretch at 22–80 folds into the LCN-type CS-alpha/beta domain; sequence DVYIRRHDGCKISCTVNDKYCDNECKSEGGSYGYCYAFGCWCEGLPNDKAWKSETNTCG. Disulfide bonds link C31/C79, C35/C56, C42/C61, and C46/C63. Residue G80 is modified to Glycine amide.

This sequence belongs to the long (4 C-C) scorpion toxin superfamily. Sodium channel inhibitor family. Beta subfamily. In terms of tissue distribution, expressed by the venom gland.

It is found in the secreted. Its function is as follows. Depressant insect toxins cause a transient contraction paralysis followed by a slow flaccid paralysis. They bind voltage-independently to sodium channels (Nav) and block action potentials, primarily by depolarizing the axonal membrane and suppressing the sodium current. The protein is Insect toxin 2-13 of Leiurus hebraeus (Hebrew deathstalker scorpion).